The primary structure comprises 251 residues: Imidazole glycerol phosphate synthase subunit HisF (251 aa).

Catalysis depends on residues Asp-11 and Asp-130.

This sequence belongs to the HisA/HisF family. As to quaternary structure, heterodimer of HisH and HisF.

It is found in the cytoplasm. It catalyses the reaction 5-[(5-phospho-1-deoxy-D-ribulos-1-ylimino)methylamino]-1-(5-phospho-beta-D-ribosyl)imidazole-4-carboxamide + L-glutamine = D-erythro-1-(imidazol-4-yl)glycerol 3-phosphate + 5-amino-1-(5-phospho-beta-D-ribosyl)imidazole-4-carboxamide + L-glutamate + H(+). It functions in the pathway amino-acid biosynthesis; L-histidine biosynthesis; L-histidine from 5-phospho-alpha-D-ribose 1-diphosphate: step 5/9. Its function is as follows. IGPS catalyzes the conversion of PRFAR and glutamine to IGP, AICAR and glutamate. The HisF subunit catalyzes the cyclization activity that produces IGP and AICAR from PRFAR using the ammonia provided by the HisH subunit. The protein is Imidazole glycerol phosphate synthase subunit HisF of Chlorobium chlorochromatii (strain CaD3).